The primary structure comprises 291 residues: 3-hydroxy-5-phosphonooxypentane-2,4-dione thiolase (291 aa).

Residue lysine 203 is the Schiff-base intermediate with substrate of the active site.

This sequence belongs to the DeoC/FbaB aldolase family. Homodecamer.

Its subcellular location is the cytoplasm. The enzyme catalyses dihydroxyacetone phosphate + acetyl-CoA = 3-hydroxy-2,4-dioxopentyl phosphate + CoA. Functionally, involved in the degradation of phospho-AI-2, thereby terminating induction of the lsr operon and closing the AI-2 signaling cycle. Catalyzes the transfer of an acetyl moiety from 3-hydroxy-5-phosphonooxypentane-2,4-dione to CoA to form glycerone phosphate and acetyl-CoA. This is 3-hydroxy-5-phosphonooxypentane-2,4-dione thiolase from Yersinia enterocolitica serotype O:8 / biotype 1B (strain NCTC 13174 / 8081).